Here is a 122-residue protein sequence, read N- to C-terminus: Large ribosomal subunit protein uL14 (122 aa).

It belongs to the universal ribosomal protein uL14 family. As to quaternary structure, part of the 50S ribosomal subunit. Forms a cluster with proteins L3 and L19. In the 70S ribosome, L14 and L19 interact and together make contacts with the 16S rRNA in bridges B5 and B8.

In terms of biological role, binds to 23S rRNA. Forms part of two intersubunit bridges in the 70S ribosome. The chain is Large ribosomal subunit protein uL14 from Micrococcus luteus (strain ATCC 4698 / DSM 20030 / JCM 1464 / CCM 169 / CCUG 5858 / IAM 1056 / NBRC 3333 / NCIMB 9278 / NCTC 2665 / VKM Ac-2230) (Micrococcus lysodeikticus).